The chain runs to 743 residues: POU domain, class 2, transcription factor 1 (743 aa).

Over residues methionine 1–serine 11 the composition is skewed to polar residues. Disordered stretches follow at residues methionine 1–proline 34, serine 67–alanine 95, alanine 258–serine 283, and serine 357–lysine 381. Residues serine 81–alanine 95 show a composition bias toward low complexity. A phosphothreonine mark is found at threonine 270 and threonine 276. In terms of domain architecture, POU-specific spans glutamate 280–glutamate 354. Residue serine 283 is modified to Phosphoserine. Over residues serine 357–proline 371 the composition is skewed to low complexity. Positions arginine 379 to asparagine 438 form a DNA-binding region, homeobox. 2 positions are modified to phosphoserine: serine 385 and serine 448. Polar residues predominate over residues valine 494–asparagine 504. The disordered stretch occupies residues valine 494–leucine 557. Residues threonine 505 to leucine 557 show a composition bias toward low complexity.

The protein belongs to the POU transcription factor family. Class-2 subfamily. As to quaternary structure, interacts with POU2AF1; the interaction increases POU2F1 transactivation activity. Interacts with NR3C1, AR, PGR and HCFC1. (Microbial infection) Associates with the herpes simplex virus VP16-induced complex; binding to HCFC1 activates the viral transcriptional activator VP16 for association with POU2F1, to form a multiprotein-DNA complex responsible for activating transcription of the viral immediate early genes. In terms of assembly, (Microbial infection) Interacts with human herpesvirus 8 (KSHV) protein RTA/ORF50; this interaction enhances RTA/ORF50-mediated transactivation of several viral promoters including K-bZIP promoter. Phosphorylated by PRKDC. Ubiquitous. Isoform 2 is lymphocyte-specific.

It localises to the nucleus. In terms of biological role, transcription factor that binds to the octamer motif (5'-ATTTGCAT-3') and activates the promoters of the genes for some small nuclear RNAs (snRNA) and of genes such as those for histone H2B and immunoglobulins. Modulates transcription transactivation by NR3C1, AR and PGR. (Microbial infection) In case of human herpes simplex virus (HSV) infection, POU2F1 forms a multiprotein-DNA complex with the viral transactivator protein VP16 and HCFC1 thereby enabling the transcription of the viral immediate early genes. This chain is POU domain, class 2, transcription factor 1 (POU2F1), found in Homo sapiens (Human).